A 102-amino-acid polypeptide reads, in one-letter code: Co-chaperonin GroES (102 aa).

Belongs to the GroES chaperonin family. As to quaternary structure, heptamer of 7 subunits arranged in a ring. Interacts with the chaperonin GroEL.

It localises to the cytoplasm. Together with the chaperonin GroEL, plays an essential role in assisting protein folding. The GroEL-GroES system forms a nano-cage that allows encapsulation of the non-native substrate proteins and provides a physical environment optimized to promote and accelerate protein folding. GroES binds to the apical surface of the GroEL ring, thereby capping the opening of the GroEL channel. In Chlamydia trachomatis serovar D (strain ATCC VR-885 / DSM 19411 / UW-3/Cx), this protein is Co-chaperonin GroES.